The following is a 425-amino-acid chain: Histidine--tRNA ligase (425 aa).

The protein belongs to the class-II aminoacyl-tRNA synthetase family. In terms of assembly, homodimer.

The protein resides in the cytoplasm. It catalyses the reaction tRNA(His) + L-histidine + ATP = L-histidyl-tRNA(His) + AMP + diphosphate + H(+). This is Histidine--tRNA ligase from Shewanella sp. (strain ANA-3).